Consider the following 321-residue polypeptide: Lipoyl synthase (321 aa).

Residues cysteine 68, cysteine 73, cysteine 79, cysteine 94, cysteine 98, cysteine 101, and serine 308 each coordinate [4Fe-4S] cluster. One can recognise a Radical SAM core domain in the interval 80 to 297 (FNHGTATFMI…KALADELGFT (218 aa)).

The protein belongs to the radical SAM superfamily. Lipoyl synthase family. It depends on [4Fe-4S] cluster as a cofactor.

Its subcellular location is the cytoplasm. It carries out the reaction [[Fe-S] cluster scaffold protein carrying a second [4Fe-4S](2+) cluster] + N(6)-octanoyl-L-lysyl-[protein] + 2 oxidized [2Fe-2S]-[ferredoxin] + 2 S-adenosyl-L-methionine + 4 H(+) = [[Fe-S] cluster scaffold protein] + N(6)-[(R)-dihydrolipoyl]-L-lysyl-[protein] + 4 Fe(3+) + 2 hydrogen sulfide + 2 5'-deoxyadenosine + 2 L-methionine + 2 reduced [2Fe-2S]-[ferredoxin]. Its pathway is protein modification; protein lipoylation via endogenous pathway; protein N(6)-(lipoyl)lysine from octanoyl-[acyl-carrier-protein]: step 2/2. Functionally, catalyzes the radical-mediated insertion of two sulfur atoms into the C-6 and C-8 positions of the octanoyl moiety bound to the lipoyl domains of lipoate-dependent enzymes, thereby converting the octanoylated domains into lipoylated derivatives. The chain is Lipoyl synthase from Shewanella putrefaciens (strain CN-32 / ATCC BAA-453).